Reading from the N-terminus, the 121-residue chain is Conopressin-conophysin (121 aa).

The signal sequence occupies residues 1-20; that stretch reads MGRLTMALCWLLLLLLTTQA. An intrachain disulfide couples Cys-21 to Cys-26. Position 27 is a 4-hydroxyproline; partial; in Conopressin-ba1c (Pro-27). A Glycine amide modification is found at Gly-29. Cystine bridges form between Cys-43-Cys-83, Cys-46-Cys-57, Cys-51-Cys-73, Cys-58-Cys-63, Cys-90-Cys-108, Cys-102-Cys-120, and Cys-109-Cys-114.

It belongs to the vasopressin/oxytocin family. Expressed by the venom duct.

It is found in the secreted. In Conus bayani (Bayan's cone), this protein is Conopressin-conophysin.